An 865-amino-acid polypeptide reads, in one-letter code: Rifampicin phosphotransferase (865 aa).

The segment at 2–314 (SGRLVVDLQD…FHIVQSRPIT (313 aa)) is ATP-binding. Lys23, Arg117, Gly132, Thr136, Gln183, Glu297, Gln309, and Arg311 together coordinate ATP. Positions 327 to 752 (FRVYLSVGHQ…TSEGVALSGA (426 aa)) are rifampicin-binding. Residues 403 to 430 (ENGEFEPTPAETDGGAPPAGDGAEPDEA) are disordered. The span at 409–424 (PTPAETDGGAPPAGDG) shows a compositional bias: low complexity. The swivel phosphohistidine stretch occupies residues 765-863 (GLAVSAGTVE…VHGTEGYIEL (99 aa)). The active-site Tele-phosphohistidine intermediate is His823.

It belongs to the rifampicin phosphotransferase family.

The enzyme catalyses rifampicin + ATP + H2O = 21-phosphorifampicin + AMP + phosphate + 2 H(+). In terms of biological role, catalyzes the phosphorylation of rifampicin, also known as rifampin (RIF), leading to its inactivation. Confers high level resistance to a variety of clinically used rifamycin antibiotics. The chain is Rifampicin phosphotransferase from Streptomyces sp.